The primary structure comprises 366 residues: Holliday junction branch migration complex subunit RuvB (366 aa).

Positions 1 to 49 (MAIISSKKQPPEPNGQPNKRPESAPAAPKEKVLQPEAAIDEQGKQEESI) are disordered. The segment at 13-210 (PNGQPNKRPE…FGLIQKLRFY (198 aa)) is large ATPase domain (RuvB-L). Residues Ile-49, Arg-50, Gly-91, Lys-94, Thr-95, Thr-96, 157 to 159 (EDY), Arg-200, Tyr-210, and Arg-247 each bind ATP. Thr-95 serves as a coordination point for Mg(2+). The interval 211 to 281 (EVDELSQIVL…IAAEALQLFQ (71 aa)) is small ATPAse domain (RuvB-S). Residues 284–366 (PCGLDWTDRR…TPPNEQLSLL (83 aa)) form a head domain (RuvB-H) region. DNA contacts are provided by Arg-339 and Arg-344.

The protein belongs to the RuvB family. Homohexamer. Forms an RuvA(8)-RuvB(12)-Holliday junction (HJ) complex. HJ DNA is sandwiched between 2 RuvA tetramers; dsDNA enters through RuvA and exits via RuvB. An RuvB hexamer assembles on each DNA strand where it exits the tetramer. Each RuvB hexamer is contacted by two RuvA subunits (via domain III) on 2 adjacent RuvB subunits; this complex drives branch migration. In the full resolvosome a probable DNA-RuvA(4)-RuvB(12)-RuvC(2) complex forms which resolves the HJ.

It localises to the cytoplasm. It carries out the reaction ATP + H2O = ADP + phosphate + H(+). Functionally, the RuvA-RuvB-RuvC complex processes Holliday junction (HJ) DNA during genetic recombination and DNA repair, while the RuvA-RuvB complex plays an important role in the rescue of blocked DNA replication forks via replication fork reversal (RFR). RuvA specifically binds to HJ cruciform DNA, conferring on it an open structure. The RuvB hexamer acts as an ATP-dependent pump, pulling dsDNA into and through the RuvAB complex. RuvB forms 2 homohexamers on either side of HJ DNA bound by 1 or 2 RuvA tetramers; 4 subunits per hexamer contact DNA at a time. Coordinated motions by a converter formed by DNA-disengaged RuvB subunits stimulates ATP hydrolysis and nucleotide exchange. Immobilization of the converter enables RuvB to convert the ATP-contained energy into a lever motion, pulling 2 nucleotides of DNA out of the RuvA tetramer per ATP hydrolyzed, thus driving DNA branch migration. The RuvB motors rotate together with the DNA substrate, which together with the progressing nucleotide cycle form the mechanistic basis for DNA recombination by continuous HJ branch migration. Branch migration allows RuvC to scan DNA until it finds its consensus sequence, where it cleaves and resolves cruciform DNA. The polypeptide is Holliday junction branch migration complex subunit RuvB (Trichormus variabilis (strain ATCC 29413 / PCC 7937) (Anabaena variabilis)).